A 489-amino-acid chain; its full sequence is Male-specific lethal 1-like 1 (489 aa).

Disordered regions lie at residues 126 to 164 (PMVS…VRKG) and 224 to 311 (VKKD…EDMQ). A coiled-coil region spans residues 179–227 (LLLQLELIEQQQKHLHNKNKEIEDLKAEKEMLMARIERMEHRLQMVKKD). The 120-residue stretch at 347–466 (TVEVPSWRES…LKQQDFDLPW (120 aa)) folds into the PEHE domain. Residues 371–389 (ECLDDSVFLKRHSKLELDE) are interaction with KAT8 HAT domain. The short motif at 380–394 (KRHSKLELDEKRRKR) is the Bipartite nuclear localization signal element.

Belongs to the msl-1 family. Component of a multisubunit histone acetyltransferase complex (MSL). Interacts (via PEHE domain) with KAT8 (via HAT domain) and MSL3 (via MRG domain); both interactions are direct.

Its subcellular location is the nucleus. It localises to the nucleoplasm. It is found in the nucleus speckle. In terms of biological role, component of histone acetyltransferase complex. Within MSL complex, promotes ubiquitination of histone H2B. In Danio rerio (Zebrafish), this protein is Male-specific lethal 1-like 1 (msl1l1).